Reading from the N-terminus, the 175-residue chain is Small ribosomal subunit protein uS9 (175 aa).

It belongs to the universal ribosomal protein uS9 family.

The polypeptide is Small ribosomal subunit protein uS9 (Streptomyces griseus subsp. griseus (strain JCM 4626 / CBS 651.72 / NBRC 13350 / KCC S-0626 / ISP 5235)).